Here is a 318-residue protein sequence, read N- to C-terminus: Aspartate carbamoyltransferase catalytic subunit (318 aa).

R59 and T60 together coordinate carbamoyl phosphate. Position 87 (K87) interacts with L-aspartate. Carbamoyl phosphate contacts are provided by R109, H137, and Q140. 2 residues coordinate L-aspartate: R170 and R224. The carbamoyl phosphate site is built by G265 and P266.

It belongs to the aspartate/ornithine carbamoyltransferase superfamily. ATCase family. Heterododecamer (2C3:3R2) of six catalytic PyrB chains organized as two trimers (C3), and six regulatory PyrI chains organized as three dimers (R2).

The enzyme catalyses carbamoyl phosphate + L-aspartate = N-carbamoyl-L-aspartate + phosphate + H(+). It functions in the pathway pyrimidine metabolism; UMP biosynthesis via de novo pathway; (S)-dihydroorotate from bicarbonate: step 2/3. In terms of biological role, catalyzes the condensation of carbamoyl phosphate and aspartate to form carbamoyl aspartate and inorganic phosphate, the committed step in the de novo pyrimidine nucleotide biosynthesis pathway. This chain is Aspartate carbamoyltransferase catalytic subunit, found in Rhizobium johnstonii (strain DSM 114642 / LMG 32736 / 3841) (Rhizobium leguminosarum bv. viciae).